Consider the following 446-residue polypeptide: MHGHSRNGQAHVPRRKRRNRFVKKNGQCNVYFANLSNKSQRYMADIFTTCVDTRWRYMLMIFSAAFLVSWLFFGLLFWCIAFFHGDLEPSPSGPTAGGPGGNGGGAAPTAAKPCIMHVNGFLGAFLFSVETQTTIGYGFRCVTEECPLAVIAVVVQSIVGCVIDSFMIGTIMAKMPRPKKRAQTLLFSHHAVISVRDGKLCLMWRVGNLRKSHIVEAHVRAQLIKPYMTQEGEYLPLDQRDLNVGYDIGLDRIFLVSPIIIVHEIDEDSPLYGMGKEELESEDFEIVVILEGMVEATAMTTQARSSYLASEILWGHRFEPVVFEEKSHYKVDYSRFHKTYEVAGTPCCSARELQESKITVLPAPPPPPSAFCYENELALMSQEEEEMEEEAAAAAAVAAGLGLEAGSKEETGIIRMLEFGSHLDLERMQAATLPLDNISYRRESAI.

Over 1–55 (MHGHSRNGQAHVPRRKRRNRFVKKNGQCNVYFANLSNKSQRYMADIFTTCVDTRW) the chain is Cytoplasmic. Residues 56-80 (RYMLMIFSAAFLVSWLFFGLLFWCI) form a helical membrane-spanning segment. Topologically, residues 81–120 (AFFHGDLEPSPSGPTAGGPGGNGGGAAPTAAKPCIMHVNG) are extracellular. Positions 91-111 (PSGPTAGGPGGNGGGAAPTAA) are val/Gly/Ala/Pro stretch. The segment at residues 121–132 (FLGAFLFSVETQ) is an intramembrane region (helical; Pore-forming). An intramembrane region (pore-forming) is located at residues 133-139 (TTIGYGF). The Selectivity filter motif lies at 134 to 139 (TIGYGF). Topologically, residues 140 to 148 (RCVTEECPL) are extracellular. A helical transmembrane segment spans residues 149-170 (AVIAVVVQSIVGCVIDSFMIGT). The Cytoplasmic segment spans residues 171–446 (IMAKMPRPKK…NISYRRESAI (276 aa)). The PDZ-binding signature appears at 444–446 (SAI).

The protein belongs to the inward rectifier-type potassium channel (TC 1.A.2.1) family. KCNJ4 subfamily. As to quaternary structure, homomultimeric and heteromultimeric association with KCNJ2 and KCNJ12. Interacts with DLG2 and DLG4. Associates, via its PDZ-recognition domain, with a complex containing LIN7A, LIN7B, LIN7C, DLG1, CASK and APBA1. Interacts with TAX1BP3. TAX1BP3 competes with LIN7 family members for KCNJ4 binding. In terms of tissue distribution, detected in kidney distal convoluted tubules (at protein level). Widely expressed throughout the brain. Also found in some peripheral tissues.

The protein resides in the cell membrane. It localises to the cytoplasmic vesicle membrane. It is found in the postsynaptic cell membrane. It catalyses the reaction K(+)(in) = K(+)(out). In terms of biological role, inward rectifier potassium channels are characterized by a greater tendency to allow potassium to flow into the cell rather than out of it. Their voltage dependence is regulated by the concentration of extracellular potassium; as external potassium is raised, the voltage range of the channel opening shifts to more positive voltages. The inward rectification is mainly due to the blockage of outward current by internal magnesium. Can be blocked by extracellular barium and cesium. The polypeptide is Inward rectifier potassium channel 4 (Kcnj4) (Rattus norvegicus (Rat)).